Consider the following 176-residue polypeptide: 3-hydroxydecanoyl-[acyl-carrier-protein] dehydratase (176 aa).

H75 is an active-site residue.

Belongs to the thioester dehydratase family. FabA subfamily. Homodimer.

Its subcellular location is the cytoplasm. The catalysed reaction is a (3R)-hydroxyacyl-[ACP] = a (2E)-enoyl-[ACP] + H2O. It carries out the reaction (3R)-hydroxydecanoyl-[ACP] = (2E)-decenoyl-[ACP] + H2O. The enzyme catalyses (2E)-decenoyl-[ACP] = (3Z)-decenoyl-[ACP]. Its pathway is lipid metabolism; fatty acid biosynthesis. Functionally, necessary for the introduction of cis unsaturation into fatty acids. Catalyzes the dehydration of (3R)-3-hydroxydecanoyl-ACP to E-(2)-decenoyl-ACP and then its isomerization to Z-(3)-decenoyl-ACP. Can catalyze the dehydratase reaction for beta-hydroxyacyl-ACPs with saturated chain lengths up to 16:0, being most active on intermediate chain length. The sequence is that of 3-hydroxydecanoyl-[acyl-carrier-protein] dehydratase from Haemophilus ducreyi (strain 35000HP / ATCC 700724).